A 307-amino-acid polypeptide reads, in one-letter code: Putative serine/threonine-protein phosphatase C22H10.04 (307 aa).

Asp-51, His-53, Asp-79, and Asn-111 together coordinate Mn(2+). The Proton donor role is filled by His-112. His-161 and His-236 together coordinate Mn(2+).

It belongs to the PPP phosphatase family. PP-X subfamily. Requires Mn(2+) as cofactor.

It catalyses the reaction O-phospho-L-seryl-[protein] + H2O = L-seryl-[protein] + phosphate. The catalysed reaction is O-phospho-L-threonyl-[protein] + H2O = L-threonyl-[protein] + phosphate. The polypeptide is Putative serine/threonine-protein phosphatase C22H10.04 (Schizosaccharomyces pombe (strain 972 / ATCC 24843) (Fission yeast)).